A 278-amino-acid chain; its full sequence is MINSKTKLLGLIGHPVEHSLSPTMHNEAIKDKDLNYVYLAFDVESENLKDVVNGAKAIGWKGFNITIPHKIEIMKYLDKIDNDAKLIGAVNTVKIENNKAIGYNTDGIGARLSIEEIIGEVKDYNILVIGAGGSSRAVCCELAKNNNLTIINRTVEKAEIIANDLSNKLNNAVYYGGLNHNYNMANFDIIINTTSLGMYPNVDNKPPISMQNIKKDAVVMDLIYNPKETLFLKEAKEKGCATINGLGMLIYQGAKSFEIWTGVKPDINIMKNAIIDIL.

Residues 19–21 (SLS) and Thr-66 contribute to the shikimate site. Residue Lys-70 is the Proton acceptor of the active site. Shikimate contacts are provided by Asn-91 and Asp-106. NADP(+) is bound by residues 130–134 (GAGGS), 152–157 (NRTVEK), and Leu-222. Residue Tyr-224 participates in shikimate binding. NADP(+) is bound at residue Gly-245.

Belongs to the shikimate dehydrogenase family. As to quaternary structure, homodimer.

The catalysed reaction is shikimate + NADP(+) = 3-dehydroshikimate + NADPH + H(+). The protein operates within metabolic intermediate biosynthesis; chorismate biosynthesis; chorismate from D-erythrose 4-phosphate and phosphoenolpyruvate: step 4/7. Involved in the biosynthesis of the chorismate, which leads to the biosynthesis of aromatic amino acids. Catalyzes the reversible NADPH linked reduction of 3-dehydroshikimate (DHSA) to yield shikimate (SA). This chain is Shikimate dehydrogenase (NADP(+)), found in Methanococcus aeolicus (strain ATCC BAA-1280 / DSM 17508 / OCM 812 / Nankai-3).